The primary structure comprises 367 residues: 2-aminoethylphosphonate--pyruvate transaminase (367 aa).

N6-(pyridoxal phosphate)lysine is present on lysine 193.

The protein belongs to the class-V pyridoxal-phosphate-dependent aminotransferase family. PhnW subfamily. In terms of assembly, homodimer. It depends on pyridoxal 5'-phosphate as a cofactor.

It catalyses the reaction (2-aminoethyl)phosphonate + pyruvate = phosphonoacetaldehyde + L-alanine. Its function is as follows. Involved in phosphonate degradation. The protein is 2-aminoethylphosphonate--pyruvate transaminase of Vibrio cholerae serotype O1 (strain ATCC 39541 / Classical Ogawa 395 / O395).